A 359-amino-acid polypeptide reads, in one-letter code: Photosystem II protein D1 1 (359 aa).

The next 3 membrane-spanning stretches (helical) occupy residues 29–46, 118–133, and 142–156; these read YVGWFGVLMIPTLLAATI, HFLIGIYAYMGREWEL, and WICVAYSAPVAAASA. His118 contributes to the chlorophyll a binding site. A pheophytin a-binding site is contributed by Tyr126. [CaMn4O5] cluster is bound by residues Asp170 and Glu189. The helical transmembrane segment at 197 to 218 threads the bilayer; the sequence is FHMLGVAGVFGGSLFSAMHGSL. His198 contributes to the chlorophyll a binding site. Residues His215 and 264 to 265 each bind a quinone; that span reads SF. His215 is a Fe cation binding site. His272 is a binding site for Fe cation. The helical transmembrane segment at 274-288 threads the bilayer; it reads FLAAWPVVGIWFTAL. [CaMn4O5] cluster is bound by residues His332, Glu333, Asp342, and Ala344. A propeptide spanning residues 345–359 is cleaved from the precursor; that stretch reads AAESTPVALQAPAIG.

Belongs to the reaction center PufL/M/PsbA/D family. In terms of assembly, PSII is composed of 1 copy each of membrane proteins PsbA, PsbB, PsbC, PsbD, PsbE, PsbF, PsbH, PsbI, PsbJ, PsbK, PsbL, PsbM, PsbT, PsbX, PsbY, PsbZ, Psb30/Ycf12, peripheral proteins PsbO, CyanoQ (PsbQ), PsbU, PsbV and a large number of cofactors. It forms dimeric complexes. The D1/D2 heterodimer binds P680, chlorophylls that are the primary electron donor of PSII, and subsequent electron acceptors. It shares a non-heme iron and each subunit binds pheophytin, quinone, additional chlorophylls, carotenoids and lipids. D1 provides most of the ligands for the Mn4-Ca-O5 cluster of the oxygen-evolving complex (OEC). There is also a Cl(-1) ion associated with D1 and D2, which is required for oxygen evolution. The PSII complex binds additional chlorophylls, carotenoids and specific lipids. is required as a cofactor. In terms of processing, tyr-161 forms a radical intermediate that is referred to as redox-active TyrZ, YZ or Y-Z. Post-translationally, C-terminally processed by CtpA; processing is essential to allow assembly of the oxygen-evolving complex and thus photosynthetic growth.

It is found in the cellular thylakoid membrane. It carries out the reaction 2 a plastoquinone + 4 hnu + 2 H2O = 2 a plastoquinol + O2. Functionally, photosystem II (PSII) is a light-driven water:plastoquinone oxidoreductase that uses light energy to abstract electrons from H(2)O, generating O(2) and a proton gradient subsequently used for ATP formation. It consists of a core antenna complex that captures photons, and an electron transfer chain that converts photonic excitation into a charge separation. The D1/D2 (PsbA/PsbD) reaction center heterodimer binds P680, the primary electron donor of PSII as well as several subsequent electron acceptors. This Synechococcus sp. (strain CC9605) protein is Photosystem II protein D1 1.